A 463-amino-acid chain; its full sequence is Argininosuccinate lyase (463 aa).

This sequence belongs to the lyase 1 family. Argininosuccinate lyase subfamily.

The protein resides in the cytoplasm. It carries out the reaction 2-(N(omega)-L-arginino)succinate = fumarate + L-arginine. It functions in the pathway amino-acid biosynthesis; L-arginine biosynthesis; L-arginine from L-ornithine and carbamoyl phosphate: step 3/3. This Streptococcus pneumoniae (strain 70585) protein is Argininosuccinate lyase.